A 548-amino-acid chain; its full sequence is 2-succinyl-5-enolpyruvyl-6-hydroxy-3-cyclohexene-1-carboxylate synthase (548 aa).

Belongs to the TPP enzyme family. MenD subfamily. Homodimer. It depends on Mg(2+) as a cofactor. Requires Mn(2+) as cofactor. Thiamine diphosphate serves as cofactor.

The enzyme catalyses isochorismate + 2-oxoglutarate + H(+) = 5-enolpyruvoyl-6-hydroxy-2-succinyl-cyclohex-3-ene-1-carboxylate + CO2. Its pathway is quinol/quinone metabolism; 1,4-dihydroxy-2-naphthoate biosynthesis; 1,4-dihydroxy-2-naphthoate from chorismate: step 2/7. The protein operates within quinol/quinone metabolism; menaquinone biosynthesis. Its function is as follows. Catalyzes the thiamine diphosphate-dependent decarboxylation of 2-oxoglutarate and the subsequent addition of the resulting succinic semialdehyde-thiamine pyrophosphate anion to isochorismate to yield 2-succinyl-5-enolpyruvyl-6-hydroxy-3-cyclohexene-1-carboxylate (SEPHCHC). In Mycobacterium ulcerans (strain Agy99), this protein is 2-succinyl-5-enolpyruvyl-6-hydroxy-3-cyclohexene-1-carboxylate synthase.